The following is a 173-amino-acid chain: Cytochrome c-type biogenesis protein CcmE (173 aa).

The Cytoplasmic segment spans residues 1 to 8 (MNPRRKSR). Residues 9-29 (FKLVIFVVLGIAIASGLMLYA) form a helical; Signal-anchor for type II membrane protein membrane-spanning segment. Topologically, residues 30–173 (LRQNIDLFYT…RDRQEKEGAK (144 aa)) are periplasmic. The heme site is built by His131 and Tyr135. Residues 152–173 (GIEAADLKGESARDRQEKEGAK) form a disordered region. The span at 156-173 (ADLKGESARDRQEKEGAK) shows a compositional bias: basic and acidic residues.

This sequence belongs to the CcmE/CycJ family.

The protein resides in the cell inner membrane. Its function is as follows. Heme chaperone required for the biogenesis of c-type cytochromes. Transiently binds heme delivered by CcmC and transfers the heme to apo-cytochromes in a process facilitated by CcmF and CcmH. This Haemophilus influenzae (strain ATCC 51907 / DSM 11121 / KW20 / Rd) protein is Cytochrome c-type biogenesis protein CcmE.